We begin with the raw amino-acid sequence, 344 residues long: GTPase Obg (344 aa).

One can recognise an Obg domain in the interval 1–159 (MKFLDEAKVY…MWLILRLKLI (159 aa)). Residues 160-327 (ADAGLVGLPN…ALRAIQAQLD (168 aa)) enclose the OBG-type G domain. GTP-binding positions include 166 to 173 (GLPNAGKS), 191 to 195 (FTTLH), 212 to 215 (DIPG), 279 to 282 (SKAD), and 308 to 310 (SAA). 2 residues coordinate Mg(2+): serine 173 and threonine 193.

The protein belongs to the TRAFAC class OBG-HflX-like GTPase superfamily. OBG GTPase family. As to quaternary structure, monomer. Mg(2+) is required as a cofactor.

It is found in the cytoplasm. Functionally, an essential GTPase which binds GTP, GDP and possibly (p)ppGpp with moderate affinity, with high nucleotide exchange rates and a fairly low GTP hydrolysis rate. Plays a role in control of the cell cycle, stress response, ribosome biogenesis and in those bacteria that undergo differentiation, in morphogenesis control. In Methylorubrum populi (strain ATCC BAA-705 / NCIMB 13946 / BJ001) (Methylobacterium populi), this protein is GTPase Obg.